Reading from the N-terminus, the 80-residue chain is Trefoil factor 3 (80 aa).

Positions 1–21 (MEARMFWLLVVLLALASSSSA) are cleaved as a signal peptide. The region spanning 30-73 (NQCAVPAKDRVDCGYPQVTPEQCNNRGCCFDSSIXGVPWCFKPL) is the P-type domain. 3 cysteine pairs are disulfide-bonded: Cys32–Cys58, Cys42–Cys57, and Cys52–Cys69.

In terms of assembly, monomer. Homodimer; disulfide-linked.

The protein resides in the secreted. Its subcellular location is the extracellular space. The protein localises to the extracellular matrix. It localises to the cytoplasm. Functionally, involved in the maintenance and repair of the intestinal mucosa. Promotes the mobility of epithelial cells in healing processes (motogen). The chain is Trefoil factor 3 (TFF3) from Sus scrofa (Pig).